Reading from the N-terminus, the 161-residue chain is S-ribosylhomocysteine lyase (161 aa).

The Fe cation site is built by His-58, His-62, and Cys-128.

It belongs to the LuxS family. As to quaternary structure, homodimer. The cofactor is Fe cation.

It carries out the reaction S-(5-deoxy-D-ribos-5-yl)-L-homocysteine = (S)-4,5-dihydroxypentane-2,3-dione + L-homocysteine. Its function is as follows. Involved in the synthesis of autoinducer 2 (AI-2) which is secreted by bacteria and is used to communicate both the cell density and the metabolic potential of the environment. The regulation of gene expression in response to changes in cell density is called quorum sensing. Catalyzes the transformation of S-ribosylhomocysteine (RHC) to homocysteine (HC) and 4,5-dihydroxy-2,3-pentadione (DPD). The polypeptide is S-ribosylhomocysteine lyase (Bifidobacterium adolescentis (strain ATCC 15703 / DSM 20083 / NCTC 11814 / E194a)).